We begin with the raw amino-acid sequence, 295 residues long: Tyrosine recombinase XerC (295 aa).

Residues 1–84 form the Core-binding (CB) domain; sequence MTLEEQFLSY…SLKSFYRFLT (84 aa). The region spanning 105–289 is the Tyr recombinase domain; it reads KLPEFFYQDE…SMQHLTVEYR (185 aa). Catalysis depends on residues R145, K169, H241, R244, and H267. Y276 functions as the O-(3'-phospho-DNA)-tyrosine intermediate in the catalytic mechanism.

This sequence belongs to the 'phage' integrase family. XerC subfamily. In terms of assembly, forms a cyclic heterotetrameric complex composed of two molecules of XerC and two molecules of XerD.

Its subcellular location is the cytoplasm. In terms of biological role, site-specific tyrosine recombinase, which acts by catalyzing the cutting and rejoining of the recombining DNA molecules. The XerC-XerD complex is essential to convert dimers of the bacterial chromosome into monomers to permit their segregation at cell division. It also contributes to the segregational stability of plasmids. The polypeptide is Tyrosine recombinase XerC (Lactobacillus delbrueckii subsp. bulgaricus (strain ATCC 11842 / DSM 20081 / BCRC 10696 / JCM 1002 / NBRC 13953 / NCIMB 11778 / NCTC 12712 / WDCM 00102 / Lb 14)).